The following is a 71-amino-acid chain: Protein DP71L (71 aa).

Important for host CHOP inhibition stretches follow at residues 16–18 and 57–61; these read VRF and LSTVL.

Belongs to the asfivirus DP71L family. Interacts (via C-terminus) with host PPP1CB.

In terms of biological role, interacts with the host phosphatase PP1 catalytic subunit (PPP1CB) and recruits it to dephosphorylate EIF2S1/eIF2alpha and therefore restores the host translation that has been shut-down by the host. Also inhibits the EIF2S1/eIF2alpha-ATF4-DDIT3/CHOP pathway. This African swine fever virus (strain Badajoz 1971 Vero-adapted) (Ba71V) protein is Protein DP71L.